A 295-amino-acid chain; its full sequence is Acetyl-coenzyme A carboxylase carboxyl transferase subunit beta (295 aa).

The interval Met1–Lys20 is disordered. The 268-residue stretch at Leu28–Ala295 folds into the CoA carboxyltransferase N-terminal domain. Zn(2+) is bound by residues Cys32, Cys35, Cys51, and Cys54. The C4-type zinc finger occupies Cys32–Cys54.

Belongs to the AccD/PCCB family. Acetyl-CoA carboxylase is a heterohexamer composed of biotin carboxyl carrier protein (AccB), biotin carboxylase (AccC) and two subunits each of ACCase subunit alpha (AccA) and ACCase subunit beta (AccD). The cofactor is Zn(2+).

It is found in the cytoplasm. The enzyme catalyses N(6)-carboxybiotinyl-L-lysyl-[protein] + acetyl-CoA = N(6)-biotinyl-L-lysyl-[protein] + malonyl-CoA. It functions in the pathway lipid metabolism; malonyl-CoA biosynthesis; malonyl-CoA from acetyl-CoA: step 1/1. Functionally, component of the acetyl coenzyme A carboxylase (ACC) complex. Biotin carboxylase (BC) catalyzes the carboxylation of biotin on its carrier protein (BCCP) and then the CO(2) group is transferred by the transcarboxylase to acetyl-CoA to form malonyl-CoA. This is Acetyl-coenzyme A carboxylase carboxyl transferase subunit beta from Xanthomonas euvesicatoria pv. vesicatoria (strain 85-10) (Xanthomonas campestris pv. vesicatoria).